The sequence spans 150 residues: Macrodomain Ter protein (150 aa).

Belongs to the MatP family. In terms of assembly, homodimer.

The protein resides in the cytoplasm. Required for spatial organization of the terminus region of the chromosome (Ter macrodomain) during the cell cycle. Prevents early segregation of duplicated Ter macrodomains during cell division. Binds specifically to matS, which is a 13 bp signature motif repeated within the Ter macrodomain. This Escherichia coli O81 (strain ED1a) protein is Macrodomain Ter protein.